The chain runs to 428 residues: Flap endonuclease 1-B (428 aa).

The tract at residues 1–132 (MGIKGLTKVL…KELAKRSLKR (132 aa)) is N-domain. A Mg(2+)-binding site is contributed by aspartate 34. Arginine 98 is a DNA binding site. Mg(2+) is bound by residues aspartate 114, glutamate 186, glutamate 188, aspartate 207, and aspartate 209. The segment at 150 to 281 (AVEKFSKRTV…QRALKLIRQH (132 aa)) is I-domain. Glutamate 186 is a DNA binding site. Residues glycine 259 and aspartate 261 each coordinate DNA. Aspartate 261 serves as a coordination point for Mg(2+).

It belongs to the XPG/RAD2 endonuclease family. FEN1 subfamily. As to quaternary structure, interacts with PCNA. Three molecules of FEN1 bind to one PCNA trimer with each molecule binding to one PCNA monomer. PCNA stimulates the nuclease activity without altering cleavage specificity. Mg(2+) is required as a cofactor. Post-translationally, phosphorylated. Phosphorylation upon DNA damage induces relocalization to the nuclear plasma.

The protein localises to the nucleus. Its subcellular location is the nucleolus. It is found in the nucleoplasm. It localises to the mitochondrion. Structure-specific nuclease with 5'-flap endonuclease and 5'-3' exonuclease activities involved in DNA replication and repair. During DNA replication, cleaves the 5'-overhanging flap structure that is generated by displacement synthesis when DNA polymerase encounters the 5'-end of a downstream Okazaki fragment. It enters the flap from the 5'-end and then tracks to cleave the flap base, leaving a nick for ligation. Also involved in the long patch base excision repair (LP-BER) pathway, by cleaving within the apurinic/apyrimidinic (AP) site-terminated flap. Acts as a genome stabilization factor that prevents flaps from equilibrating into structures that lead to duplications and deletions. Also possesses 5'-3' exonuclease activity on nicked or gapped double-stranded DNA, and exhibits RNase H activity. Also involved in replication and repair of rDNA and in repairing mitochondrial DNA. This chain is Flap endonuclease 1-B, found in Sorghum bicolor (Sorghum).